The chain runs to 247 residues: 3-deoxy-manno-octulosonate cytidylyltransferase (247 aa).

This sequence belongs to the KdsB family.

It localises to the cytoplasm. It carries out the reaction 3-deoxy-alpha-D-manno-oct-2-ulosonate + CTP = CMP-3-deoxy-beta-D-manno-octulosonate + diphosphate. Its pathway is nucleotide-sugar biosynthesis; CMP-3-deoxy-D-manno-octulosonate biosynthesis; CMP-3-deoxy-D-manno-octulosonate from 3-deoxy-D-manno-octulosonate and CTP: step 1/1. It functions in the pathway bacterial outer membrane biogenesis; lipopolysaccharide biosynthesis. In terms of biological role, activates KDO (a required 8-carbon sugar) for incorporation into bacterial lipopolysaccharide in Gram-negative bacteria. The chain is 3-deoxy-manno-octulosonate cytidylyltransferase from Chlorobium phaeobacteroides (strain DSM 266 / SMG 266 / 2430).